A 418-amino-acid polypeptide reads, in one-letter code: MTNSIEQAWDLAKQRFAAVGVDVDAALTRLDTLPVSMHCWQGDDVTGFEDPDGVLTGGIQATGNYPGKARNATELRSDLELALALIPGPKRLNLHAIYLESDTSVARNKIEPRHFSHWVAWAKKHQLGLDFNPSCFSHPLSADGFTLSHADPEIRQFWIEHCQASRRISAYFGEQLGTPSVMNIWIPDGMKDTPIDRLAPRQRLLSALDEVISEKLNPAHHIDAVESKLFGIGAESYTVGSNEFYMGYAASRQTALCLDAGHFHPTEVISDKISSAMLYVPRLLLHVSRPVRWDSDHVVLLDDETQAIASEIIRHNLFDRVHIGLDFFDASINRIAAWVIGTRNMKKALLRALLEPTDMLRQLELRGDYTARLALLEEQKSLPWQAIWEGYCQRNDVPVDARWLDAVREYEQQILSQR.

The Mn(2+) site is built by H262, D294, and D296.

This sequence belongs to the rhamnose isomerase family. In terms of assembly, homotetramer. Mn(2+) is required as a cofactor.

Its subcellular location is the cytoplasm. It catalyses the reaction L-rhamnopyranose = L-rhamnulose. It functions in the pathway carbohydrate degradation; L-rhamnose degradation; glycerone phosphate from L-rhamnose: step 1/3. Catalyzes the interconversion of L-rhamnose and L-rhamnulose. The chain is L-rhamnose isomerase from Yersinia pseudotuberculosis serotype IB (strain PB1/+).